The following is a 386-amino-acid chain: 8-amino-7-oxononanoate synthase (386 aa).

Arginine 22 and arginine 29 together coordinate substrate. 109–110 (GY) is a pyridoxal 5'-phosphate binding site. Histidine 134 contacts substrate. Residues serine 182, 207-210 (DDAH), and 237-240 (TLSK) each bind pyridoxal 5'-phosphate. Residue lysine 240 is modified to N6-(pyridoxal phosphate)lysine. Substrate is bound at residue threonine 349.

It belongs to the class-II pyridoxal-phosphate-dependent aminotransferase family. BioF subfamily. As to quaternary structure, homodimer. Pyridoxal 5'-phosphate serves as cofactor.

The catalysed reaction is 6-carboxyhexanoyl-[ACP] + L-alanine + H(+) = (8S)-8-amino-7-oxononanoate + holo-[ACP] + CO2. It functions in the pathway cofactor biosynthesis; biotin biosynthesis. Functionally, catalyzes the decarboxylative condensation of pimeloyl-[acyl-carrier protein] and L-alanine to produce 8-amino-7-oxononanoate (AON), [acyl-carrier protein], and carbon dioxide. This chain is 8-amino-7-oxononanoate synthase, found in Beijerinckia indica subsp. indica (strain ATCC 9039 / DSM 1715 / NCIMB 8712).